A 792-amino-acid polypeptide reads, in one-letter code: Ubiquitin carboxyl-terminal hydrolase 10 (792 aa).

N-acetylalanine is present on A2. The tract at residues 2-99 (ALHNPQYIFG…ILGCTTSKKI (98 aa)) is interaction with p53/TP53. Residues 6–21 (PQYIFGDFSPDEFNQF) form a G3BP1-binding region. A Phosphothreonine modification is found at T24. Residues 126-164 (SNAEAETLENDSGAGGLGQRERKKKKKRPPGYYSYLKDG) form a disordered region. S208 and S223 each carry phosphoserine. A compositionally biased stretch (basic and acidic residues) spans 300-309 (DEGADLDPAK). Residues 300–323 (DEGADLDPAKPESQSPPAESALSA) form a disordered region. S314 is subject to Phosphoserine. S330 is modified (phosphoserine; by ATM). Positions 350–369 (PMAYVETKCSPPVPSPLASE) are disordered. 2 positions are modified to phosphoserine: S359 and S364. The 381-residue stretch at 409–789 (RGLINKGNWC…TAYLLYYRRV (381 aa)) folds into the USP domain. The active-site Nucleophile is C418. S541 carries the phosphoserine modification. Residues 542–580 (PTHEKHSVSNGPRSDLIEDEELEDTGKGSEDEWEQVGPK) form a disordered region. Position 566 is a phosphothreonine (T566). A Phosphoserine modification is found at S570. The Proton acceptor role is filled by H743.

Belongs to the peptidase C19 family. USP10 subfamily. As to quaternary structure, found in a deubiquitination complex with TANK, USP10 and ZC3H12A; this complex inhibits genotoxic stress- or interleukin-1-beta (IL1B)-mediated NF-kappa-B activation by promoting IKBKG or TRAF6 deubiquitination. Interacts with IKBKG; this interaction increases in response to DNA damage. Interacts with TANK; this interaction increases in response to DNA damage. Interacts with TRAF6; this interaction increases in response to DNA damage. Interacts with ZC3H12A; this interaction increases in response to DNA damage. Interacts with G3BP1 (via NTF2 domain) and G3BP2 (via NTF2 domain); inhibiting stress granule formation. Post-translationally, phosphorylated by ATM following DNA damage, leading to stabilization and translocation it to the nucleus. In terms of processing, ubiquitinated. Deubiquitinated by USP13.

It is found in the cytoplasm. The protein localises to the nucleus. It localises to the early endosome. The enzyme catalyses Thiol-dependent hydrolysis of ester, thioester, amide, peptide and isopeptide bonds formed by the C-terminal Gly of ubiquitin (a 76-residue protein attached to proteins as an intracellular targeting signal).. With respect to regulation, specifically inhibited by spautin-1 (specific and potent autophagy inhibitor-1), a derivative of MBCQ that binds to USP10 and inhibits deubiquitinase activity. Regulated by PIK3C3/VPS34-containing complexes. Functionally, hydrolase that can remove conjugated ubiquitin from target proteins such as p53/TP53, RPS2/us5, RPS3/us3, RPS10/eS10, BECN1, SNX3 and CFTR. Acts as an essential regulator of p53/TP53 stability: in unstressed cells, specifically deubiquitinates p53/TP53 in the cytoplasm, leading to counteract MDM2 action and stabilize p53/TP53. Following DNA damage, translocates to the nucleus and deubiquitinates p53/TP53, leading to regulate the p53/TP53-dependent DNA damage response. Component of a regulatory loop that controls autophagy and p53/TP53 levels: mediates deubiquitination of BECN1, a key regulator of autophagy, leading to stabilize the PIK3C3/VPS34-containing complexes. In turn, PIK3C3/VPS34-containing complexes regulate USP10 stability, suggesting the existence of a regulatory system by which PIK3C3/VPS34-containing complexes regulate p53/TP53 protein levels via USP10 and USP13. Does not deubiquitinate MDM2. Plays a key role in 40S ribosome subunit recycling when a ribosome has stalled during translation: acts both by inhibiting formation of stress granules, which store stalled translation pre-initiation complexes, and mediating deubiquitination of 40S ribosome subunits. Acts as a negative regulator of stress granules formation by lowering G3BP1 and G3BP2 valence, thereby preventing G3BP1 and G3BP2 ability to undergo liquid-liquid phase separation (LLPS) and assembly of stress granules. Promotes 40S ribosome subunit recycling following ribosome dissociation in response to ribosome stalling by mediating deubiquitination of 40S ribosomal proteins RPS2/us5, RPS3/us3 and RPS10/eS10, thereby preventing their degradation by the proteasome. Part of a ribosome quality control that takes place when ribosomes have stalled during translation initiation (iRQC): USP10 acts by removing monoubiquitination of RPS2/us5 and RPS3/us3, promoting 40S ribosomal subunit recycling. Deubiquitinates CFTR in early endosomes, enhancing its endocytic recycling. Involved in a TANK-dependent negative feedback response to attenuate NF-kappa-B activation via deubiquitinating IKBKG or TRAF6 in response to interleukin-1-beta (IL1B) stimulation or upon DNA damage. Deubiquitinates TBX21 leading to its stabilization. Plays a negative role in the RLR signaling pathway upon RNA virus infection by blocking the RIGI-mediated MAVS activation. Mechanistically, removes the unanchored 'Lys-63'-linked polyubiquitin chains of MAVS to inhibit its aggregation, essential for its activation. The protein is Ubiquitin carboxyl-terminal hydrolase 10 (Usp10) of Mus musculus (Mouse).